The primary structure comprises 455 residues: Bifunctional protein GlmU (455 aa).

Residues 1 to 226 (MSLEIVILAA…PMEVQGANDR (226 aa)) form a pyrophosphorylase region. UDP-N-acetyl-alpha-D-glucosamine is bound by residues 8-11 (LAAG), Lys-22, Gln-73, 78-79 (GT), 99-101 (YGD), Gly-136, Glu-151, Asn-166, and Asn-224. Asp-101 contributes to the Mg(2+) binding site. Mg(2+) is bound at residue Asn-224. The linker stretch occupies residues 227–247 (KQLSELERHYQLRAGRRLMAQ). An N-acetyltransferase region spans residues 248–455 (GVTLRDPARF…WKRPEKIKKN (208 aa)). 2 residues coordinate UDP-N-acetyl-alpha-D-glucosamine: Arg-330 and Lys-348. The active-site Proton acceptor is His-360. Positions 363 and 374 each coordinate UDP-N-acetyl-alpha-D-glucosamine. Acetyl-CoA contacts are provided by residues Ala-377, 383–384 (NY), Ser-402, Ala-420, and Arg-437.

The protein in the N-terminal section; belongs to the N-acetylglucosamine-1-phosphate uridyltransferase family. In the C-terminal section; belongs to the transferase hexapeptide repeat family. As to quaternary structure, homotrimer. Mg(2+) is required as a cofactor.

The protein resides in the cytoplasm. The catalysed reaction is alpha-D-glucosamine 1-phosphate + acetyl-CoA = N-acetyl-alpha-D-glucosamine 1-phosphate + CoA + H(+). It carries out the reaction N-acetyl-alpha-D-glucosamine 1-phosphate + UTP + H(+) = UDP-N-acetyl-alpha-D-glucosamine + diphosphate. Its pathway is nucleotide-sugar biosynthesis; UDP-N-acetyl-alpha-D-glucosamine biosynthesis; N-acetyl-alpha-D-glucosamine 1-phosphate from alpha-D-glucosamine 6-phosphate (route II): step 2/2. The protein operates within nucleotide-sugar biosynthesis; UDP-N-acetyl-alpha-D-glucosamine biosynthesis; UDP-N-acetyl-alpha-D-glucosamine from N-acetyl-alpha-D-glucosamine 1-phosphate: step 1/1. It functions in the pathway bacterial outer membrane biogenesis; LPS lipid A biosynthesis. In terms of biological role, catalyzes the last two sequential reactions in the de novo biosynthetic pathway for UDP-N-acetylglucosamine (UDP-GlcNAc). The C-terminal domain catalyzes the transfer of acetyl group from acetyl coenzyme A to glucosamine-1-phosphate (GlcN-1-P) to produce N-acetylglucosamine-1-phosphate (GlcNAc-1-P), which is converted into UDP-GlcNAc by the transfer of uridine 5-monophosphate (from uridine 5-triphosphate), a reaction catalyzed by the N-terminal domain. This Pseudomonas fluorescens (strain Pf0-1) protein is Bifunctional protein GlmU.